A 154-amino-acid polypeptide reads, in one-letter code: Ribonuclease H (154 aa).

The region spanning 1-142 is the RNase H type-1 domain; it reads MKQVDIFTDG…CDTIARGHAS (142 aa). The Mg(2+) site is built by aspartate 9, glutamate 47, aspartate 69, and aspartate 134.

Belongs to the RNase H family. As to quaternary structure, monomer. The cofactor is Mg(2+).

Its subcellular location is the cytoplasm. The catalysed reaction is Endonucleolytic cleavage to 5'-phosphomonoester.. Its function is as follows. Endonuclease that specifically degrades the RNA of RNA-DNA hybrids. This chain is Ribonuclease H, found in Oleidesulfovibrio alaskensis (strain ATCC BAA-1058 / DSM 17464 / G20) (Desulfovibrio alaskensis).